A 66-amino-acid polypeptide reads, in one-letter code: Small ribosomal subunit protein bS21 (66 aa).

This sequence belongs to the bacterial ribosomal protein bS21 family.

This chain is Small ribosomal subunit protein bS21, found in Bdellovibrio bacteriovorus (strain ATCC 15356 / DSM 50701 / NCIMB 9529 / HD100).